Consider the following 680-residue polypeptide: NADPH--cytochrome P450 reductase (680 aa).

The Lumenal segment spans residues 1–5 (MALDK). The chain crosses the membrane as a helical span at residues 6–23 (LDLYVIIVLAVAVAAYFA). Residues 24 to 680 (KNQFLDQPQD…VQNRYQEDVW (657 aa)) lie on the Cytoplasmic side of the membrane. The Flavodoxin-like domain maps to 60-204 (TLLLFGSQTG…DFLTWKDNVF (145 aa)). FMN is bound by residues 66-71 (SQTGTA), 117-120 (ATYG), 152-161 (LGNSTYEFYN), and Asp187. The FAD-binding FR-type domain maps to 264–509 (THPYLAKISK…SGPRNKFNKF (246 aa)). Arg283 contacts NADP(+). FAD contacts are provided by residues 439 to 442 (RYYS), 457 to 459 (TAV), and 473 to 476 (GVVT). Residues Thr537, 599 to 600 (SR), 606 to 610 (KVYVQ), and Asp642 each bind NADP(+). Position 680 (Trp680) interacts with FAD.

This sequence belongs to the NADPH--cytochrome P450 reductase family. In the N-terminal section; belongs to the flavodoxin family. It in the C-terminal section; belongs to the flavoprotein pyridine nucleotide cytochrome reductase family. Requires FAD as cofactor. FMN is required as a cofactor.

It localises to the endoplasmic reticulum membrane. Its subcellular location is the mitochondrion outer membrane. The protein resides in the cell membrane. The enzyme catalyses 2 oxidized [cytochrome P450] + NADPH = 2 reduced [cytochrome P450] + NADP(+) + H(+). Its function is as follows. This enzyme is required for electron transfer from NADP to cytochrome P450 in microsomes. It can also provide electron transfer to heme oxygenase and cytochrome B5. Involved in ergosterol biosynthesis. The chain is NADPH--cytochrome P450 reductase from Candida maltosa (Yeast).